The chain runs to 95 residues: Aspartyl/glutamyl-tRNA(Asn/Gln) amidotransferase subunit C (95 aa).

Belongs to the GatC family. As to quaternary structure, heterotrimer of A, B and C subunits.

The catalysed reaction is L-glutamyl-tRNA(Gln) + L-glutamine + ATP + H2O = L-glutaminyl-tRNA(Gln) + L-glutamate + ADP + phosphate + H(+). The enzyme catalyses L-aspartyl-tRNA(Asn) + L-glutamine + ATP + H2O = L-asparaginyl-tRNA(Asn) + L-glutamate + ADP + phosphate + 2 H(+). Its function is as follows. Allows the formation of correctly charged Asn-tRNA(Asn) or Gln-tRNA(Gln) through the transamidation of misacylated Asp-tRNA(Asn) or Glu-tRNA(Gln) in organisms which lack either or both of asparaginyl-tRNA or glutaminyl-tRNA synthetases. The reaction takes place in the presence of glutamine and ATP through an activated phospho-Asp-tRNA(Asn) or phospho-Glu-tRNA(Gln). The polypeptide is Aspartyl/glutamyl-tRNA(Asn/Gln) amidotransferase subunit C (Pseudomonas putida (strain ATCC 700007 / DSM 6899 / JCM 31910 / BCRC 17059 / LMG 24140 / F1)).